The sequence spans 401 residues: E3 ubiquitin-protein ligase DA2 (401 aa).

The RING-type; degenerate zinc-finger motif lies at 59-102 (CPICFLYYPSLNRSRCCMKSICTECFLQMKNPNSARPTQCPFCK). Residues 139–153 (KEMQDDEEKMQKRLE) are compositionally biased toward basic and acidic residues. Residues 139 to 164 (KEMQDDEEKMQKRLESCSSSTSAMTG) form a disordered region.

Interacts with DA1 (via C-terminus).

It catalyses the reaction S-ubiquitinyl-[E2 ubiquitin-conjugating enzyme]-L-cysteine + [acceptor protein]-L-lysine = [E2 ubiquitin-conjugating enzyme]-L-cysteine + N(6)-ubiquitinyl-[acceptor protein]-L-lysine.. It functions in the pathway protein modification; protein ubiquitination. Functionally, E3 ubiquitin-protein ligase involved in the regulation of organ and seed size. Acts synergistically with DA1 to regulate seed size. Functions synergistically with DA1 to restrict cell proliferation in the maternal integuments of ovules and developing seeds. Seems to function independently of BB. Possesses E3 ubiquitin-protein ligase activity in vitro. Polyubiquitinates DA1, DAR1 and DAR2, but not DAR3. The sequence is that of E3 ubiquitin-protein ligase DA2 from Arabidopsis thaliana (Mouse-ear cress).